We begin with the raw amino-acid sequence, 100 residues long: NADH-quinone oxidoreductase subunit K (100 aa).

A run of 3 helical transmembrane segments spans residues 1-21 (MIGLNHYLIVSGLLFCIGLAG), 28-48 (ILLLFFSTEIMLNAINIGFVA), and 64-84 (FIISIAASEVAIGLGLVILWF).

The protein belongs to the complex I subunit 4L family. NDH-1 is composed of 14 different subunits. Subunits NuoA, H, J, K, L, M, N constitute the membrane sector of the complex.

The protein resides in the cell inner membrane. It carries out the reaction a quinone + NADH + 5 H(+)(in) = a quinol + NAD(+) + 4 H(+)(out). Its function is as follows. NDH-1 shuttles electrons from NADH, via FMN and iron-sulfur (Fe-S) centers, to quinones in the respiratory chain. The immediate electron acceptor for the enzyme in this species is believed to be ubiquinone. Couples the redox reaction to proton translocation (for every two electrons transferred, four hydrogen ions are translocated across the cytoplasmic membrane), and thus conserves the redox energy in a proton gradient. This chain is NADH-quinone oxidoreductase subunit K, found in Helicobacter pylori (strain ATCC 700392 / 26695) (Campylobacter pylori).